Here is an 815-residue protein sequence, read N- to C-terminus: Translation initiation factor IF-2 (815 aa).

Residues 153–176 are compositionally biased toward basic and acidic residues; it reads VQEKEAEKKVEKLKTADKPKEGNK. The tract at residues 153–219 is disordered; sequence VQEKEAEKKV…THLSQKIQAE (67 aa). The segment covering 191 to 209 has biased composition (basic residues); the sequence is KQLHVARHNPNRRLKKKDR. In terms of domain architecture, tr-type G spans 315–482; it reads ARPPIVTIMG…AISLTAEILE (168 aa). Residues 324-331 form a G1 region; it reads GHVDHGKT. Residue 324–331 coordinates GTP; that stretch reads GHVDHGKT. The tract at residues 349–353 is G2; that stretch reads GITQH. The segment at 370–373 is G3; it reads DTPG. GTP contacts are provided by residues 370–374 and 424–427; these read DTPGH and NKID. The segment at 424–427 is G4; that stretch reads NKID. A G5 region spans residues 460-462; that stretch reads SAH.

This sequence belongs to the TRAFAC class translation factor GTPase superfamily. Classic translation factor GTPase family. IF-2 subfamily.

The protein resides in the cytoplasm. In terms of biological role, one of the essential components for the initiation of protein synthesis. Protects formylmethionyl-tRNA from spontaneous hydrolysis and promotes its binding to the 30S ribosomal subunits. Also involved in the hydrolysis of GTP during the formation of the 70S ribosomal complex. This is Translation initiation factor IF-2 from Vesicomyosocius okutanii subsp. Calyptogena okutanii (strain HA).